We begin with the raw amino-acid sequence, 175 residues long: Cuticle protein 16.5, isoform B (175 aa).

19 repeat units span residues 17 to 20 (AAPA), 25 to 28 (AAPA), 31 to 34 (AAPA), 38 to 41 (AAPA), 44 to 47 (AAPA), 51 to 54 (AAPA), 57 to 60 (AAPA), 64 to 67 (AAPA), 70 to 73 (AAPA), 77 to 80 (AAPA), 83 to 86 (AAPA), 91 to 94 (AAPA), 99 to 102 (AAPA), 106 to 109 (AAPA), 134 to 137 (AAPA), 144 to 147 (AAPA), 151 to 154 (AAPA), 158 to 161 (AAPA), and 165 to 168 (AAPA).

Its function is as follows. Component of the cuticle of migratory locust which contains more than 100 different structural proteins. The sequence is that of Cuticle protein 16.5, isoform B from Locusta migratoria (Migratory locust).